The primary structure comprises 323 residues: Acetyl esterase (323 aa).

An Involved in the stabilization of the negatively charged intermediate by the formation of the oxyanion hole motif is present at residues His91–Gly93. Residues Ser165, Asp262, and His292 contribute to the active site.

The protein belongs to the 'GDXG' lipolytic enzyme family. Homodimer. Interacts with MalT and MelA.

It localises to the cytoplasm. Displays esterase activity towards short chain fatty esters (acyl chain length of up to 8 carbons). Able to hydrolyze triacetylglycerol (triacetin) and tributyrylglycerol (tributyrin), but not trioleylglycerol (triolein) or cholesterol oleate. Negatively regulates MalT activity by antagonizing maltotriose binding. Inhibits MelA galactosidase activity. This Salmonella choleraesuis (strain SC-B67) protein is Acetyl esterase.